A 119-amino-acid polypeptide reads, in one-letter code: NADH dehydrogenase [ubiquinone] 1 subunit C2 (119 aa).

A helical transmembrane segment spans residues 56–75 (GLHRQLLYITAFFFAGYYLV).

Belongs to the complex I NDUFC2 subunit family. In terms of assembly, complex I is composed of 45 different subunits. Interacts with TMEM242.

The protein resides in the mitochondrion inner membrane. Accessory subunit of the mitochondrial membrane respiratory chain NADH dehydrogenase (Complex I), that is believed not to be involved in catalysis but required for the complex assembly. Complex I functions in the transfer of electrons from NADH to the respiratory chain. The immediate electron acceptor for the enzyme is believed to be ubiquinone. This Pan troglodytes (Chimpanzee) protein is NADH dehydrogenase [ubiquinone] 1 subunit C2.